The chain runs to 62 residues: Sperm protamine P1 (62 aa).

The segment at Met1 to Tyr62 is disordered.

The protein belongs to the protamine P1 family. In terms of tissue distribution, testis.

The protein localises to the nucleus. It localises to the chromosome. In terms of biological role, protamines substitute for histones in the chromatin of sperm during the haploid phase of spermatogenesis. They compact sperm DNA into a highly condensed, stable and inactive complex. This is Sperm protamine P1 (PRM1) from Thylogale stigmatica (Red-legged pademelon).